We begin with the raw amino-acid sequence, 360 residues long: Mannitol-1-phosphate 5-dehydrogenase (360 aa).

An NAD(+)-binding site is contributed by 6–17 (ALHFGAGNIGRG).

It belongs to the mannitol dehydrogenase family.

It carries out the reaction D-mannitol 1-phosphate + NAD(+) = beta-D-fructose 6-phosphate + NADH + H(+). The polypeptide is Mannitol-1-phosphate 5-dehydrogenase (Mycoplasmopsis pulmonis (strain UAB CTIP) (Mycoplasma pulmonis)).